Reading from the N-terminus, the 404-residue chain is Synaptic vesicle membrane protein VAT-1 homolog (404 aa).

The tract at residues 1-55 (MSAEREATEAATVAAAAEARAETGAGEGAPSQPPTVEVASDPQPPPAPEASASAS) is disordered. The residue at position 2 (Ser2) is an N-acetylserine. Residue Ser2 is modified to Phosphoserine. Residues 9 to 24 (EAATVAAAAEARAETG) are compositionally biased toward low complexity. Residues Ser31 and Ser40 each carry the phosphoserine modification.

It belongs to the zinc-containing alcohol dehydrogenase family. Quinone oxidoreductase subfamily. Interacts with MFN1 and MFN2. As to expression, ubiquitously expressed.

It is found in the cytoplasm. It localises to the mitochondrion outer membrane. In terms of biological role, plays a part in calcium-regulated keratinocyte activation in epidermal repair mechanisms. Has no effect on cell proliferation. Possesses ATPase activity. May negatively regulate mitochondrial fusion. This chain is Synaptic vesicle membrane protein VAT-1 homolog (Vat1), found in Rattus norvegicus (Rat).